The following is a 147-amino-acid chain: MVNLTAKERQLITGTWSKICAKTLGKQALGSMLYTYPWTQRYFSSFGNLSSIEAIFHNAAVATHGEKVLTSIGEAIKHMDDIKGYYAQLSKYHSETLHVDPYNFKRFCSCTIISMAQTLQEDFTPELQAAFEKLFAAIADALGKGYH.

In terms of domain architecture, Globin spans 3–147 (NLTAKERQLI…IADALGKGYH (145 aa)). H64 and H93 together coordinate heme b.

Belongs to the globin family. As to quaternary structure, heterotetramer of two alpha chains and two beta chains. In terms of tissue distribution, red blood cells.

Its function is as follows. Involved in oxygen transport from the lung to the various peripheral tissues. This chain is Hemoglobin subunit beta-1 (hbb1), found in Xenopus tropicalis (Western clawed frog).